Consider the following 362-residue polypeptide: Protein RecA (362 aa).

Residue 77-84 (GPESSGKT) participates in ATP binding.

It belongs to the RecA family.

It is found in the cytoplasm. Functionally, can catalyze the hydrolysis of ATP in the presence of single-stranded DNA, the ATP-dependent uptake of single-stranded DNA by duplex DNA, and the ATP-dependent hybridization of homologous single-stranded DNAs. It interacts with LexA causing its activation and leading to its autocatalytic cleavage. In Rhizobium etli (strain ATCC 51251 / DSM 11541 / JCM 21823 / NBRC 15573 / CFN 42), this protein is Protein RecA.